The following is a 119-amino-acid chain: Large ribosomal subunit protein bL19 (119 aa).

The protein belongs to the bacterial ribosomal protein bL19 family.

In terms of biological role, this protein is located at the 30S-50S ribosomal subunit interface and may play a role in the structure and function of the aminoacyl-tRNA binding site. The sequence is that of Large ribosomal subunit protein bL19 from Arthrobacter sp. (strain FB24).